The chain runs to 338 residues: Ferrochelatase (338 aa).

Fe cation-binding residues include His-207 and Glu-293.

It belongs to the ferrochelatase family.

It localises to the cytoplasm. It carries out the reaction heme b + 2 H(+) = protoporphyrin IX + Fe(2+). Its pathway is porphyrin-containing compound metabolism; protoheme biosynthesis; protoheme from protoporphyrin-IX: step 1/1. In terms of biological role, catalyzes the ferrous insertion into protoporphyrin IX. The polypeptide is Ferrochelatase (Shewanella denitrificans (strain OS217 / ATCC BAA-1090 / DSM 15013)).